The following is a 650-amino-acid chain: ATP-binding cassette sub-family G member 3 (650 aa).

Residues 1–387 (MASNNDPTVI…KNFKGFPWVT (387 aa)) are Cytoplasmic-facing. Residues 37 to 279 (LSFHNISYQE…FRSAGYNYES (243 aa)) form the ABC transporter domain. In terms of domain architecture, ABC transmembrane type-2 spans 381 to 644 (KGFPWVTVIQ…TITYVQLLQV (264 aa)). Residues 388 to 408 (VIQAIITVILATAVGTAFRVL) traverse the membrane as a helical segment. The Extracellular segment spans residues 409–420 (KNDCIEVQMRAG). Residues 421–441 (LLYLLTIFQCITSVSAGELFV) form a helical membrane-spanning segment. The Cytoplasmic segment spans residues 442–469 (IDRVRFLHEHTSGYYRVSSYFFGKLLAE). The helical transmembrane segment at 470–490 (LIPRRLLPSTVFSLITYVIAG) threads the bilayer. At 491–498 (VKMSMKCF) the chain is on the extracellular side. The helical transmembrane segment at 499 to 519 (FTMICTIMVLAYSASSLPLSI) threads the bilayer. Residues 520 to 527 (GAGENAVA) lie on the Cytoplasmic side of the membrane. The chain crosses the membrane as a helical span at residues 528–548 (VPTLLVTIYFVFMLFFSGLSL). Topologically, residues 549 to 623 (YSGSFLPKLS…LSSWGFWENH (75 aa)) are extracellular. Residues 624–644 (LALVCTMIILLTITYVQLLQV) traverse the membrane as a helical segment. The Cytoplasmic portion of the chain corresponds to 645 to 648 (KNIR).

Belongs to the ABC transporter superfamily. ABCG family. Eye pigment precursor importer (TC 3.A.1.204) subfamily. As to quaternary structure, may dimerize with another subunit to form a functional transporter. Highest levels of expression in thymus and spleen. Detected in lung and small intestine.

It localises to the membrane. The protein is ATP-binding cassette sub-family G member 3 (Abcg3) of Mus musculus (Mouse).